Consider the following 789-residue polypeptide: Potassium transporter 4 (789 aa).

Over 1-32 the chain is Cytoplasmic; sequence MAPAESGVSPRRNPSQLSWMNLSSNLILAYQS. Residue Ser-9 is modified to Phosphoserine. Residues 33–53 form a helical membrane-spanning segment; the sequence is FGVVYGDLSTSPLYVFPSTFI. The Extracellular portion of the chain corresponds to 54 to 68; sequence GKLHKHHNEDAVFGA. Residues 69–89 form a helical membrane-spanning segment; sequence FSLIFWTLTLIPLLKYLLVLL. The Cytoplasmic segment spans residues 90–154; sequence SADDNGEGGT…FLEKHKRLRT (65 aa). Residues 155-175 traverse the membrane as a helical segment; it reads ALLLVVLFGAAMVIGDGVLTP. Topologically, residues 176–195 are extracellular; sequence ALSVLSSLSGLQATEKNVTD. A helical membrane pass occupies residues 196 to 216; the sequence is GELLVLACVILVGLFALQHCG. Residues 217 to 219 lie on the Cytoplasmic side of the membrane; that stretch reads THR. A helical membrane pass occupies residues 220-240; sequence VAFMFAPIVIIWLISIFFIGL. Residues 241–270 lie on the Extracellular side of the membrane; that stretch reads YNIIRWNPKIIHAVSPLYIIKFFRVTGQDG. A helical membrane pass occupies residues 271–291; sequence WISLGGVLLSVTGTEAMFANL. Over 292–300 the chain is Cytoplasmic; sequence GHFTSVSIR. The helical transmembrane segment at 301–321 threads the bilayer; the sequence is VAFAVVVYPCLVVQYMGQAAF. Residues 322-340 lie on the Extracellular side of the membrane; the sequence is LSKNLGSIPNSFYDSVPDP. A helical transmembrane segment spans residues 341–361; the sequence is VFWPVFVIATLAAIVGSQAVI. Topologically, residues 362-392 are cytoplasmic; it reads TTTFSIIKQCHALGCFPRIKVVHTSKHIYGQ. The helical transmembrane segment at 393–413 threads the bilayer; that stretch reads IYIPEINWILMILTLAMAIGF. The Extracellular portion of the chain corresponds to 414-424; the sequence is RDTTLIGNAYG. Residues 425–445 form a helical membrane-spanning segment; that stretch reads IACMVVMFITTFFMALVIVVV. Over 446 to 450 the chain is Cytoplasmic; it reads WQKSC. Residues 451-471 traverse the membrane as a helical segment; sequence FLAALFLGTLWIIEGVYLSAA. The Extracellular portion of the chain corresponds to 472 to 478; the sequence is LMKVTEG. A helical transmembrane segment spans residues 479–499; that stretch reads GWVPFVLTFIFMIAMYVWHYG. Topologically, residues 500-789 are cytoplasmic; that stretch reads TRRKYSFDLH…LIEVGMIYYV (290 aa).

It belongs to the HAK/KUP transporter (TC 2.A.72.3) family. Detected at very low levels in roots, stems, leaves and flowers of mature plants and strongly expressed in the roots of potassium-starved plants.

The protein resides in the cell membrane. In terms of biological role, high-affinity potassium transporter. The sequence is that of Potassium transporter 4 (POT4) from Arabidopsis thaliana (Mouse-ear cress).